Reading from the N-terminus, the 597-residue chain is Apurinic-apyrimidinic endonuclease 1 (597 aa).

The segment covering 232 to 246 (YNNDTKYLSNPKGVT) has biased composition (polar residues). Residues 232 to 296 (YNNDTKYLSN…IPPIPKNTED (65 aa)) form a disordered region. The span at 265–274 (NNNNNNNNNK) shows a compositional bias: low complexity. Positions 380, 420, 456, 490, 493, 527, 540, 542, and 572 each coordinate Zn(2+). A Mn(2+)-binding site is contributed by histidine 493. The Mn(2+) site is built by aspartate 540 and histidine 542.

It belongs to the AP endonuclease 2 family. Zn(2+) is required as a cofactor. Requires Mn(2+) as cofactor. May be proteolytically cleaved into a 59 kDa form.

It localises to the mitochondrion. With respect to regulation, apurinic/apyrimidinic (AP) endonuclease activity is enhanced with increasing concentrations of Mn(2+), while Zn(2+) initially enhances activity but subsequently inhibits activity in a concentration-dependent manner. Co(2+) inhibits apurinic/apyrimidinic (AP) endonuclease activity at concentrations greater than 2.5 mM. Its function is as follows. Plays a role in mitochondrial DNA base excision repair (BER) pathway induced by oxidative stress. Has apurinic/apyrimidinic (AP) endonuclease activity towards double-stranded DNA (dsDNA) with a preference for C as opposite base. Has 3'-phosphatase activity; removes 3'-phosphate from blunt-end, recessed, and gapped DNA templates and thus, removes 3'-blocks for DNA polymerase activity during BER. Lacks 3'-5' exonuclease activity and does not cleave damaged bases by nucleotide incision repair (NIR). The chain is Apurinic-apyrimidinic endonuclease 1 from Plasmodium falciparum (isolate 3D7).